Reading from the N-terminus, the 565-residue chain is NAD-dependent malic enzyme (565 aa).

The Proton donor role is filled by Tyr104. Arg157 contributes to the NAD(+) binding site. The active-site Proton acceptor is the Lys175. A divalent metal cation-binding residues include Glu246, Asp247, and Asp270. Residues Asp270 and Asn418 each contribute to the NAD(+) site.

It belongs to the malic enzymes family. As to quaternary structure, homotetramer. Requires Mg(2+) as cofactor. The cofactor is Mn(2+).

It catalyses the reaction (S)-malate + NAD(+) = pyruvate + CO2 + NADH. The catalysed reaction is oxaloacetate + H(+) = pyruvate + CO2. This is NAD-dependent malic enzyme from Escherichia coli O139:H28 (strain E24377A / ETEC).